The primary structure comprises 498 residues: Zinc finger protein 682 (498 aa).

Residues Leu4–Pro75 enclose the KRAB domain. 10 consecutive C2H2-type zinc fingers follow at residues Phe173–His195, Cys201–His223, Tyr229–His251, Tyr257–His279, Tyr285–His307, Tyr313–His335, Tyr341–His363, Tyr369–His391, Tyr397–His419, and Tyr425–His447. The C2H2-type 11; degenerate zinc-finger motif lies at Tyr453–Gln475.

Belongs to the krueppel C2H2-type zinc-finger protein family.

The protein localises to the nucleus. Its function is as follows. May be involved in transcriptional regulation. The polypeptide is Zinc finger protein 682 (ZNF682) (Homo sapiens (Human)).